A 279-amino-acid polypeptide reads, in one-letter code: D-aminoacyl-tRNA deacylase (279 aa).

Positions 81–100 (GRKSLTVHHPGNPTEDNSLG) are disordered.

Belongs to the DtdA deacylase family. Monomer. Zn(2+) serves as cofactor.

It catalyses the reaction a D-aminoacyl-tRNA + H2O = a tRNA + a D-alpha-amino acid + H(+). The enzyme catalyses glycyl-tRNA(Ala) + H2O = tRNA(Ala) + glycine + H(+). In terms of biological role, D-aminoacyl-tRNA deacylase with broad substrate specificity. By recycling D-aminoacyl-tRNA to D-amino acids and free tRNA molecules, this enzyme counteracts the toxicity associated with the formation of D-aminoacyl-tRNA entities in vivo. The chain is D-aminoacyl-tRNA deacylase from Aeropyrum pernix (strain ATCC 700893 / DSM 11879 / JCM 9820 / NBRC 100138 / K1).